Reading from the N-terminus, the 447-residue chain is N-succinylarginine dihydrolase (447 aa).

Residues 19 to 28, Asn-110, and 137 to 138 contribute to the substrate site; these read AGLSFGNVAS and HR. Glu-174 is an active-site residue. Residue Arg-214 participates in substrate binding. The active site involves His-250. Positions 252 and 364 each coordinate substrate. Cys-370 acts as the Nucleophile in catalysis.

The protein belongs to the succinylarginine dihydrolase family. In terms of assembly, homodimer.

It catalyses the reaction N(2)-succinyl-L-arginine + 2 H2O + 2 H(+) = N(2)-succinyl-L-ornithine + 2 NH4(+) + CO2. Its pathway is amino-acid degradation; L-arginine degradation via AST pathway; L-glutamate and succinate from L-arginine: step 2/5. Catalyzes the hydrolysis of N(2)-succinylarginine into N(2)-succinylornithine, ammonia and CO(2). The protein is N-succinylarginine dihydrolase of Idiomarina loihiensis (strain ATCC BAA-735 / DSM 15497 / L2-TR).